The chain runs to 287 residues: 4-hydroxybenzoate octaprenyltransferase (287 aa).

Transmembrane regions (helical) follow at residues 41-61 (WPLL…GCAM), 89-109 (WEAV…ILPL), 133-153 (FFAI…PMAF), 158-178 (DTVP…SVAY), 202-224 (FGRF…YVWI), and 266-286 (HNNW…LLAG).

The protein belongs to the UbiA prenyltransferase family. The cofactor is Mg(2+).

Its subcellular location is the cell inner membrane. The catalysed reaction is all-trans-octaprenyl diphosphate + 4-hydroxybenzoate = 4-hydroxy-3-(all-trans-octaprenyl)benzoate + diphosphate. It functions in the pathway cofactor biosynthesis; ubiquinone biosynthesis. Functionally, catalyzes the prenylation of para-hydroxybenzoate (PHB) with an all-trans polyprenyl group. Mediates the second step in the final reaction sequence of ubiquinone-8 (UQ-8) biosynthesis, which is the condensation of the polyisoprenoid side chain with PHB, generating the first membrane-bound Q intermediate 3-octaprenyl-4-hydroxybenzoate. The polypeptide is 4-hydroxybenzoate octaprenyltransferase (Burkholderia orbicola (strain MC0-3)).